Here is a 480-residue protein sequence, read N- to C-terminus: Ribulose bisphosphate carboxylase large chain (480 aa).

Residues 1 to 2 (MS) constitute a propeptide that is removed on maturation. Pro3 bears the N-acetylproline mark. Position 14 is an N6,N6,N6-trimethyllysine (Lys14). Positions 123 and 173 each coordinate substrate. Lys175 serves as the catalytic Proton acceptor. A substrate-binding site is contributed by Lys177. Lys201, Asp203, and Glu204 together coordinate Mg(2+). Lys201 carries the N6-carboxylysine modification. His294 (proton acceptor) is an active-site residue. Positions 295, 327, and 379 each coordinate substrate.

The protein belongs to the RuBisCO large chain family. Type I subfamily. As to quaternary structure, heterohexadecamer of 8 large chains and 8 small chains; disulfide-linked. The disulfide link is formed within the large subunit homodimers. Requires Mg(2+) as cofactor. The disulfide bond which can form in the large chain dimeric partners within the hexadecamer appears to be associated with oxidative stress and protein turnover.

Its subcellular location is the plastid. It is found in the chloroplast. It carries out the reaction 2 (2R)-3-phosphoglycerate + 2 H(+) = D-ribulose 1,5-bisphosphate + CO2 + H2O. The enzyme catalyses D-ribulose 1,5-bisphosphate + O2 = 2-phosphoglycolate + (2R)-3-phosphoglycerate + 2 H(+). RuBisCO catalyzes two reactions: the carboxylation of D-ribulose 1,5-bisphosphate, the primary event in carbon dioxide fixation, as well as the oxidative fragmentation of the pentose substrate in the photorespiration process. Both reactions occur simultaneously and in competition at the same active site. The chain is Ribulose bisphosphate carboxylase large chain from Rivina humilis (Rougeplant).